Reading from the N-terminus, the 322-residue chain is 4-hydroxythreonine-4-phosphate dehydrogenase (322 aa).

A substrate-binding site is contributed by T132. A divalent metal cation-binding residues include H160, H205, and H260. K268, N277, and R286 together coordinate substrate.

This sequence belongs to the PdxA family. In terms of assembly, homodimer. It depends on Zn(2+) as a cofactor. Requires Mg(2+) as cofactor. The cofactor is Co(2+).

The protein localises to the cytoplasm. It carries out the reaction 4-(phosphooxy)-L-threonine + NAD(+) = 3-amino-2-oxopropyl phosphate + CO2 + NADH. Its pathway is cofactor biosynthesis; pyridoxine 5'-phosphate biosynthesis; pyridoxine 5'-phosphate from D-erythrose 4-phosphate: step 4/5. Catalyzes the NAD(P)-dependent oxidation of 4-(phosphooxy)-L-threonine (HTP) into 2-amino-3-oxo-4-(phosphooxy)butyric acid which spontaneously decarboxylates to form 3-amino-2-oxopropyl phosphate (AHAP). The polypeptide is 4-hydroxythreonine-4-phosphate dehydrogenase (Xanthomonas campestris pv. campestris (strain 8004)).